Reading from the N-terminus, the 275-residue chain is Large ribosomal subunit protein uL2 (275 aa).

Disordered regions lie at residues 28–49 (APHA…HGRI) and 224–246 (AMNP…NPHP).

It belongs to the universal ribosomal protein uL2 family. As to quaternary structure, part of the 50S ribosomal subunit. Forms a bridge to the 30S subunit in the 70S ribosome.

In terms of biological role, one of the primary rRNA binding proteins. Required for association of the 30S and 50S subunits to form the 70S ribosome, for tRNA binding and peptide bond formation. It has been suggested to have peptidyltransferase activity; this is somewhat controversial. Makes several contacts with the 16S rRNA in the 70S ribosome. This Stenotrophomonas maltophilia (strain R551-3) protein is Large ribosomal subunit protein uL2.